A 326-amino-acid polypeptide reads, in one-letter code: Ketol-acid reductoisomerase (NADP(+)) (326 aa).

The 181-residue stretch at 2–182 folds into the KARI N-terminal Rossmann domain; sequence AKIYGDEDAS…GFTRAGVIKT (181 aa). NADP(+) contacts are provided by residues 25–28, Arg-48, Ser-53, and 83–86; these read YGSQ and DEVQ. The active site involves His-108. An NADP(+)-binding site is contributed by Gly-134. One can recognise a KARI C-terminal knotted domain in the interval 183 to 325; sequence TFREEVETDL…ERLRKMMGFE (143 aa). Mg(2+)-binding residues include Asp-191, Glu-195, Glu-227, and Glu-231. Residue Ser-252 participates in substrate binding.

The protein belongs to the ketol-acid reductoisomerase family. Mg(2+) serves as cofactor.

It carries out the reaction (2R)-2,3-dihydroxy-3-methylbutanoate + NADP(+) = (2S)-2-acetolactate + NADPH + H(+). The catalysed reaction is (2R,3R)-2,3-dihydroxy-3-methylpentanoate + NADP(+) = (S)-2-ethyl-2-hydroxy-3-oxobutanoate + NADPH + H(+). The protein operates within amino-acid biosynthesis; L-isoleucine biosynthesis; L-isoleucine from 2-oxobutanoate: step 2/4. It participates in amino-acid biosynthesis; L-valine biosynthesis; L-valine from pyruvate: step 2/4. Functionally, involved in the biosynthesis of branched-chain amino acids (BCAA). Catalyzes an alkyl-migration followed by a ketol-acid reduction of (S)-2-acetolactate (S2AL) to yield (R)-2,3-dihydroxy-isovalerate. In the isomerase reaction, S2AL is rearranged via a Mg-dependent methyl migration to produce 3-hydroxy-3-methyl-2-ketobutyrate (HMKB). In the reductase reaction, this 2-ketoacid undergoes a metal-dependent reduction by NADPH to yield (R)-2,3-dihydroxy-isovalerate. This Methanopyrus kandleri (strain AV19 / DSM 6324 / JCM 9639 / NBRC 100938) protein is Ketol-acid reductoisomerase (NADP(+)).